Consider the following 151-residue polypeptide: Probable transcriptional regulator syrB2 (151 aa).

Residues 1 to 61 (MADESNTGSI…PRRYSEQQRK (61 aa)) form a disordered region. The segment covering 11–23 (AAAVAPNADVKAP) has biased composition (low complexity). The segment covering 24–35 (AAKKKRSPRRQK) has biased composition (basic residues).

The protein belongs to the SyrB family.

In terms of biological role, seems to affect the transcription of cya3. May be negatively autoregulated. This is Probable transcriptional regulator syrB2 (syrB2) from Rhizobium meliloti (strain 1021) (Ensifer meliloti).